The primary structure comprises 969 residues: Leucine--tRNA ligase (969 aa).

Positions 45 to 55 match the 'HIGH' region motif; that stretch reads PYTNAPLHIGH. Positions 649–653 match the 'KMSKS' region motif; that stretch reads KMSKS. Position 652 (Lys-652) interacts with ATP.

It belongs to the class-I aminoacyl-tRNA synthetase family.

Its subcellular location is the cytoplasm. The enzyme catalyses tRNA(Leu) + L-leucine + ATP = L-leucyl-tRNA(Leu) + AMP + diphosphate. This Staphylothermus marinus (strain ATCC 43588 / DSM 3639 / JCM 9404 / F1) protein is Leucine--tRNA ligase.